Here is a 449-residue protein sequence, read N- to C-terminus: Exodeoxyribonuclease 7 large subunit (449 aa).

It belongs to the XseA family. In terms of assembly, heterooligomer composed of large and small subunits.

The protein resides in the cytoplasm. It catalyses the reaction Exonucleolytic cleavage in either 5'- to 3'- or 3'- to 5'-direction to yield nucleoside 5'-phosphates.. Functionally, bidirectionally degrades single-stranded DNA into large acid-insoluble oligonucleotides, which are then degraded further into small acid-soluble oligonucleotides. The protein is Exodeoxyribonuclease 7 large subunit of Salmonella schwarzengrund (strain CVM19633).